The following is a 364-amino-acid chain: Succinyl-diaminopimelate desuccinylase (364 aa).

His64 serves as a coordination point for Zn(2+). The active site involves Asp66. Asp95 provides a ligand contact to Zn(2+). Glu125 functions as the Proton acceptor in the catalytic mechanism. Residues Glu126, Glu154, and His339 each coordinate Zn(2+).

This sequence belongs to the peptidase M20A family. DapE subfamily. In terms of assembly, homodimer. Requires Zn(2+) as cofactor. Co(2+) serves as cofactor.

The enzyme catalyses N-succinyl-(2S,6S)-2,6-diaminopimelate + H2O = (2S,6S)-2,6-diaminopimelate + succinate. It functions in the pathway amino-acid biosynthesis; L-lysine biosynthesis via DAP pathway; LL-2,6-diaminopimelate from (S)-tetrahydrodipicolinate (succinylase route): step 3/3. Functionally, catalyzes the hydrolysis of N-succinyl-L,L-diaminopimelic acid (SDAP), forming succinate and LL-2,6-diaminopimelate (DAP), an intermediate involved in the bacterial biosynthesis of lysine and meso-diaminopimelic acid, an essential component of bacterial cell walls. The chain is Succinyl-diaminopimelate desuccinylase from Nitratiruptor sp. (strain SB155-2).